Reading from the N-terminus, the 504-residue chain is Aromatic and large neutral amino acid transporter 5-3 (504 aa).

The tract at residues 1–24 (MESTEATMVERKAESPSSGDRARS) is disordered. The segment covering 8–24 (MVERKAESPSSGDRARS) has biased composition (basic and acidic residues). The next 6 helical transmembrane spans lie at 76–96 (YVVLVAYCLYCLLSGPSFMNW), 138–158 (HLFTVASCSYFVFAMLGGIML), 165–185 (FGALTGLACLITGWTLFGFSS), 206–226 (FFPCLCGANLFPGMVATIIAV), 233–253 (ISFIVGLSLRTIYINVEGATF), and 256–276 (VMLGYVGAGLGFCLLVALFII). A glycan (N-linked (GlcNAc...) asparagine) is linked at asparagine 310. 6 helical membrane passes run 324–344 (LSFLPLFPYFVLVLITILFFA), 356–376 (EANQIISIFSFVPCIILGGIA), 381–401 (IVPVMMICNTCGLLSWILMLI), 406–426 (CFAASQYIVSILISIQMSFLV), 436–456 (IFYPENLGKMIGFLCSVGGII), and 475–495 (MTVLCLIFALINEGLLLFMYV).

It belongs to the SLC43A transporter (TC 2.A.1.44) family.

It is found in the cell membrane. The catalysed reaction is L-tyrosine(in) = L-tyrosine(out). L-tyrosine uptake is stimulated in trans by aromatic and large neutral amino acids, but not smaller or charged amino acids. In terms of biological role, L-tyrosine transporter that is essential for parasite survival and virulence. May also act as an aromatic and large neutral amino acid transporter. Does not cotransport other charged ions. Involved in amino acid homeostasis by facilitating the net uptake of L-tyrosine and maintaining intracellular pools of aromatic and large neutral amino acids through exchange. In Toxoplasma gondii, this protein is Aromatic and large neutral amino acid transporter 5-3.